The following is a 357-amino-acid chain: Phenylalanine--tRNA ligase alpha subunit (357 aa).

Glutamate 257 lines the Mg(2+) pocket.

The protein belongs to the class-II aminoacyl-tRNA synthetase family. Phe-tRNA synthetase alpha subunit type 1 subfamily. Tetramer of two alpha and two beta subunits. Mg(2+) serves as cofactor.

The protein resides in the cytoplasm. The catalysed reaction is tRNA(Phe) + L-phenylalanine + ATP = L-phenylalanyl-tRNA(Phe) + AMP + diphosphate + H(+). In Ruegeria sp. (strain TM1040) (Silicibacter sp.), this protein is Phenylalanine--tRNA ligase alpha subunit.